Consider the following 213-residue polypeptide: Imidazole glycerol phosphate synthase subunit HisH 2 (213 aa).

Residues 4-211 (RLGLIDYGMG…LNWLETGAKP (208 aa)) form the Glutamine amidotransferase type-1 domain. C82 acts as the Nucleophile in catalysis. Residues H186 and E188 contribute to the active site.

Heterodimer of HisH and HisF.

The protein resides in the cytoplasm. The enzyme catalyses 5-[(5-phospho-1-deoxy-D-ribulos-1-ylimino)methylamino]-1-(5-phospho-beta-D-ribosyl)imidazole-4-carboxamide + L-glutamine = D-erythro-1-(imidazol-4-yl)glycerol 3-phosphate + 5-amino-1-(5-phospho-beta-D-ribosyl)imidazole-4-carboxamide + L-glutamate + H(+). The catalysed reaction is L-glutamine + H2O = L-glutamate + NH4(+). The protein operates within amino-acid biosynthesis; L-histidine biosynthesis; L-histidine from 5-phospho-alpha-D-ribose 1-diphosphate: step 5/9. IGPS catalyzes the conversion of PRFAR and glutamine to IGP, AICAR and glutamate. The HisH subunit provides the glutamine amidotransferase activity that produces the ammonia necessary to HisF for the synthesis of IGP and AICAR. This chain is Imidazole glycerol phosphate synthase subunit HisH 2 (hisH2), found in Prochlorococcus marinus (strain MIT 9313).